The following is a 472-amino-acid chain: Serralysin A (472 aa).

The propeptide occupies 1–17; the sequence is MEKNLSSRDDDALHSLS. His-186 lines the Zn(2+) pocket. Glu-187 is an active-site residue. His-190 and Tyr-221 together coordinate Zn(2+). Ca(2+) contacts are provided by Arg-258, Gly-260, Thr-262, Asp-290, Gly-292, Gly-293, Thr-332, Glu-334, Gly-339, Gly-341, Asp-343, Asn-348, Ala-350, Asn-352, Gly-356, Gly-357, Ala-358, Gly-359, Asp-361, Gly-365, Gly-366, Gly-367, Gly-368, Asp-370, Gly-374, Gly-375, Gly-377, Asp-379, Asp-388, Asp-395, and Asp-405. Hemolysin-type calcium-binding repeat units follow at residues 337 to 354 and 355 to 372; these read IGGS…DNIL and RGGA…ADRL.

The protein belongs to the peptidase M10B family. Requires Ca(2+) as cofactor. It depends on Zn(2+) as a cofactor.

The protein resides in the secreted. The catalysed reaction is Preferential cleavage of bonds with hydrophobic residues in P1'.. In Dickeya chrysanthemi (Pectobacterium chrysanthemi), this protein is Serralysin A (prtA).